The following is a 448-amino-acid chain: uncharacterized protein (448 aa).

The 152-residue stretch at 4 to 155 folds into the uDENN domain; the sequence is QAIVLATFDA…SAVNLEFDSL (152 aa). Residues 183–326 form the cDENN domain; sequence LDHLGPAFYC…FKGLSRYLSF (144 aa). In terms of domain architecture, dDENN spans 328–428; sequence GESSWGLTTY…WQYGKYFWLR (101 aa). A helical membrane pass occupies residues 425-447; sequence FWLRRVSLIFLASTCFLFILWKL.

The protein resides in the golgi apparatus membrane. The protein localises to the endoplasmic reticulum membrane. This is an uncharacterized protein from Schizosaccharomyces pombe (strain 972 / ATCC 24843) (Fission yeast).